The primary structure comprises 547 residues: NXPE family member 1 (547 aa).

A signal peptide spans 1-21; sequence MSSNTMLQKTLLILISFSVVT. N-linked (GlcNAc...) asparagine glycans are attached at residues Asn-39 and Asn-211.

The protein belongs to the NXPE family.

The protein localises to the secreted. This chain is NXPE family member 1 (NXPE1), found in Homo sapiens (Human).